The following is a 207-amino-acid chain: dITP/XTP pyrophosphatase (207 aa).

7–12 lines the substrate pocket; that stretch reads SNNAKK. Asp72 (proton acceptor) is an active-site residue. Residue Asp72 coordinates Mg(2+). Residues Ser73, 155–158, Lys184, and 189–190 each bind substrate; these read FGYD and HR.

It belongs to the HAM1 NTPase family. As to quaternary structure, homodimer. The cofactor is Mg(2+).

The enzyme catalyses XTP + H2O = XMP + diphosphate + H(+). The catalysed reaction is dITP + H2O = dIMP + diphosphate + H(+). It carries out the reaction ITP + H2O = IMP + diphosphate + H(+). Functionally, pyrophosphatase that catalyzes the hydrolysis of nucleoside triphosphates to their monophosphate derivatives, with a high preference for the non-canonical purine nucleotides XTP (xanthosine triphosphate), dITP (deoxyinosine triphosphate) and ITP. Seems to function as a house-cleaning enzyme that removes non-canonical purine nucleotides from the nucleotide pool, thus preventing their incorporation into DNA/RNA and avoiding chromosomal lesions. This is dITP/XTP pyrophosphatase from Corynebacterium efficiens (strain DSM 44549 / YS-314 / AJ 12310 / JCM 11189 / NBRC 100395).